The following is a 203-amino-acid chain: VEL1-related protein SPBPB2B2.15 (203 aa).

The signal sequence occupies residues 1-16 (MFKNLIFLFFIGLATA).

It belongs to the VEL1 family.

The protein localises to the cytoplasm. Its subcellular location is the cytosol. The polypeptide is VEL1-related protein SPBPB2B2.15 (Schizosaccharomyces pombe (strain 972 / ATCC 24843) (Fission yeast)).